The following is a 259-amino-acid chain: 3-oxo-5-alpha-steroid 4-dehydrogenase 1 (259 aa).

The next 5 helical transmembrane spans lie at 10–30 (LCLLDMLVYLEGFMAFVSIVG), 86–106 (VLLAMFLIHYVQRTLVFPVLI), 111–131 (PTLLVTFVLAFLFCTFNGYVQ), 146–166 (VTHPCFLTGFALWLVGMVINI), and 206–226 (WCGFALASWSLQGVVFALFTL).

The protein belongs to the steroid 5-alpha reductase family. Liver and prostate (at a low level).

The protein resides in the microsome membrane. The protein localises to the endoplasmic reticulum membrane. The enzyme catalyses a 3-oxo-5alpha-steroid + NADP(+) = a 3-oxo-Delta(4)-steroid + NADPH + H(+). It catalyses the reaction 5alpha-pregnane-3,20-dione + NADP(+) = progesterone + NADPH + H(+). It carries out the reaction 17beta-hydroxy-5alpha-androstan-3-one + NADP(+) = testosterone + NADPH + H(+). The catalysed reaction is androst-4-ene-3,17-dione + NADPH + H(+) = 5alpha-androstan-3,17-dione + NADP(+). Converts testosterone into 5-alpha-dihydrotestosterone and progesterone or corticosterone into their corresponding 5-alpha-3-oxosteroids. It plays a central role in sexual differentiation and androgen physiology. In Rattus norvegicus (Rat), this protein is 3-oxo-5-alpha-steroid 4-dehydrogenase 1.